Consider the following 403-residue polypeptide: NADH-quinone oxidoreductase subunit D (403 aa).

It belongs to the complex I 49 kDa subunit family. In terms of assembly, NDH-1 is composed of 14 different subunits. Subunits NuoB, C, D, E, F, and G constitute the peripheral sector of the complex.

It is found in the cell inner membrane. The catalysed reaction is a quinone + NADH + 5 H(+)(in) = a quinol + NAD(+) + 4 H(+)(out). NDH-1 shuttles electrons from NADH, via FMN and iron-sulfur (Fe-S) centers, to quinones in the respiratory chain. The immediate electron acceptor for the enzyme in this species is believed to be ubiquinone. Couples the redox reaction to proton translocation (for every two electrons transferred, four hydrogen ions are translocated across the cytoplasmic membrane), and thus conserves the redox energy in a proton gradient. The sequence is that of NADH-quinone oxidoreductase subunit D from Erythrobacter litoralis (strain HTCC2594).